Here is a 1538-residue protein sequence, read N- to C-terminus: Pentafunctional AROM polypeptide (1538 aa).

A 3-dehydroquinate synthase region spans residues 1–384 (MGVPTKISIL…HEPRASTVSN (384 aa)). Residues 44–46 (DTN), 81–84 (ESSK), 114–116 (GGV), and D119 each bind NAD(+). R130 is a 7-phospho-2-dehydro-3-deoxy-D-arabino-heptonate binding site. 139 to 140 (TT) is a binding site for NAD(+). D146 and K152 together coordinate 7-phospho-2-dehydro-3-deoxy-D-arabino-heptonate. Residue K161 coordinates NAD(+). N162 is a 7-phospho-2-dehydro-3-deoxy-D-arabino-heptonate binding site. Residues 179–182 (FLNT) and N190 each bind NAD(+). Residue E194 participates in Zn(2+) binding. 7-phospho-2-dehydro-3-deoxy-D-arabino-heptonate is bound by residues 194–197 (EVIK) and K250. The Proton acceptor; for 3-dehydroquinate synthase activity role is filled by E260. Residues 264–268 (RNLLN) and H271 contribute to the 7-phospho-2-dehydro-3-deoxy-D-arabino-heptonate site. H271 contacts Zn(2+). H275 functions as the Proton acceptor; for 3-dehydroquinate synthase activity in the catalytic mechanism. Residues H287 and K356 each coordinate 7-phospho-2-dehydro-3-deoxy-D-arabino-heptonate. H287 provides a ligand contact to Zn(2+). The EPSP synthase stretch occupies residues 397-842 (VSPGVPKGLD…WDCLSQTFKV (446 aa)). C824 serves as the catalytic For EPSP synthase activity. The segment at 866 to 973 (ASIFIIGMRG…RRKQNTFFVS (108 aa)) is shikimate kinase. Position 872 to 879 (872 to 879 (GMRGAGKT)) interacts with ATP. The interval 974-1194 (LTLPDLGLAA…AAPGQLSARE (221 aa)) is 3-dehydroquinase. Catalysis depends on H1097, which acts as the Proton acceptor; for 3-dehydroquinate dehydratase activity. Catalysis depends on K1125, which acts as the Schiff-base intermediate with substrate; for 3-dehydroquinate dehydratase activity. The segment at 1207–1538 (AKKFAVIGNP…YEHPVLNHSS (332 aa)) is shikimate dehydrogenase.

The protein in the N-terminal section; belongs to the sugar phosphate cyclases superfamily. Dehydroquinate synthase family. In the 2nd section; belongs to the EPSP synthase family. It in the 3rd section; belongs to the shikimate kinase family. This sequence in the 4th section; belongs to the type-I 3-dehydroquinase family. The protein in the C-terminal section; belongs to the shikimate dehydrogenase family. Homodimer. Zn(2+) serves as cofactor.

It is found in the cytoplasm. The enzyme catalyses 7-phospho-2-dehydro-3-deoxy-D-arabino-heptonate = 3-dehydroquinate + phosphate. It catalyses the reaction 3-dehydroquinate = 3-dehydroshikimate + H2O. It carries out the reaction shikimate + NADP(+) = 3-dehydroshikimate + NADPH + H(+). The catalysed reaction is shikimate + ATP = 3-phosphoshikimate + ADP + H(+). The enzyme catalyses 3-phosphoshikimate + phosphoenolpyruvate = 5-O-(1-carboxyvinyl)-3-phosphoshikimate + phosphate. Its pathway is metabolic intermediate biosynthesis; chorismate biosynthesis; chorismate from D-erythrose 4-phosphate and phosphoenolpyruvate: step 2/7. It participates in metabolic intermediate biosynthesis; chorismate biosynthesis; chorismate from D-erythrose 4-phosphate and phosphoenolpyruvate: step 3/7. It functions in the pathway metabolic intermediate biosynthesis; chorismate biosynthesis; chorismate from D-erythrose 4-phosphate and phosphoenolpyruvate: step 4/7. The protein operates within metabolic intermediate biosynthesis; chorismate biosynthesis; chorismate from D-erythrose 4-phosphate and phosphoenolpyruvate: step 5/7. Its pathway is metabolic intermediate biosynthesis; chorismate biosynthesis; chorismate from D-erythrose 4-phosphate and phosphoenolpyruvate: step 6/7. Functionally, the AROM polypeptide catalyzes 5 consecutive enzymatic reactions in prechorismate polyaromatic amino acid biosynthesis. The protein is Pentafunctional AROM polypeptide of Ajellomyces capsulatus (strain NAm1 / WU24) (Darling's disease fungus).